The following is a 259-amino-acid chain: MTLTAFVDDLARSLGFLSRLPIASRFFQNHSGEMSRTPRAFPLAGAVITAPAGLLLALMLGLGASSMVAAFAAIGLQVLLTGALHEDGFADTADGLGGANRERALDIMKDSRVGTFGVLALVFGVGLRVAALASLVNSLSPINVALVMIGIAAVSRALMVWHWHALPPAKPDGVAASLGKPEDNTLYTALFLGLAVAVVTIAPVTSFHPLAVMLVASGAAAFASNRLVSHRLGGQTGDTIGATQQICEITALASIAMAL.

5 consecutive transmembrane segments (helical) span residues 43-63 (LAGA…LGLG), 64-84 (ASSM…TGAL), 116-136 (FGVL…ASLV), 141-161 (PINV…LMVW), and 185-205 (TLYT…APVT).

This sequence belongs to the CobS family. Requires Mg(2+) as cofactor.

The protein localises to the cell inner membrane. It catalyses the reaction alpha-ribazole + adenosylcob(III)inamide-GDP = adenosylcob(III)alamin + GMP + H(+). It carries out the reaction alpha-ribazole 5'-phosphate + adenosylcob(III)inamide-GDP = adenosylcob(III)alamin 5'-phosphate + GMP + H(+). It functions in the pathway cofactor biosynthesis; adenosylcobalamin biosynthesis; adenosylcobalamin from cob(II)yrinate a,c-diamide: step 7/7. In terms of biological role, joins adenosylcobinamide-GDP and alpha-ribazole to generate adenosylcobalamin (Ado-cobalamin). Also synthesizes adenosylcobalamin 5'-phosphate from adenosylcobinamide-GDP and alpha-ribazole 5'-phosphate. In Allorhizobium ampelinum (strain ATCC BAA-846 / DSM 112012 / S4) (Agrobacterium vitis (strain S4)), this protein is Adenosylcobinamide-GDP ribazoletransferase.